A 36-amino-acid polypeptide reads, in one-letter code: Potassium channel toxin alpha-KTx 2.7 (36 aa).

Intrachain disulfides connect cysteine 7–cysteine 29, cysteine 13–cysteine 34, and cysteine 17–cysteine 36.

This sequence belongs to the short scorpion toxin superfamily. Potassium channel inhibitor family. Alpha-KTx 02 subfamily. Expressed by the venom gland.

Its subcellular location is the secreted. Functionally, inhibitor of voltage-gated potassium channels (Kv). This protein is capable of displacing the binding of radio-labeled noxiustoxin (AC P08815) to rat brain synaptosomes with high affinity (about 100 pM). It is also capable of inhibiting transient potassium-currents (resembling I(A)-type currents), in cultured rat cerebellar granule cells. About 50% of the peak currents are reduced by application of a 1.5 uM solution of this toxin. Is lethal to mice (when less than 100 ug are injected). The polypeptide is Potassium channel toxin alpha-KTx 2.7 (Centruroides limpidus (Mexican scorpion)).